Consider the following 85-residue polypeptide: CRISPR-associated endoribonuclease Cas2 (85 aa).

Residue Asp8 coordinates Mg(2+).

The protein belongs to the CRISPR-associated endoribonuclease Cas2 protein family. As to quaternary structure, homodimer, forms a heterotetramer with a Cas1 homodimer. The cofactor is Mg(2+).

CRISPR (clustered regularly interspaced short palindromic repeat), is an adaptive immune system that provides protection against mobile genetic elements (viruses, transposable elements and conjugative plasmids). CRISPR clusters contain sequences complementary to antecedent mobile elements and target invading nucleic acids. CRISPR clusters are transcribed and processed into CRISPR RNA (crRNA). Functions as a ssRNA-specific endoribonuclease. Involved in the integration of spacer DNA into the CRISPR cassette. In Thermococcus kodakarensis (strain ATCC BAA-918 / JCM 12380 / KOD1) (Pyrococcus kodakaraensis (strain KOD1)), this protein is CRISPR-associated endoribonuclease Cas2.